Consider the following 336-residue polypeptide: Small ribosomal subunit protein uS9m (336 aa).

Positions 32 to 81 are disordered; sequence STTTTTTTTTTTTTSDEIPTTKPRFQSRFRRNQQPHQQQRSPYTSSQVTE. A compositionally biased stretch (low complexity) spans 33 to 45; it reads TTTTTTTTTTTTT. A compositionally biased stretch (polar residues) spans 65-81; that stretch reads QPHQQQRSPYTSSQVTE.

It belongs to the universal ribosomal protein uS9 family. As to quaternary structure, component of the mitochondrial small ribosomal subunit (mt-SSU).

It is found in the mitochondrion. Functionally, component of the mitochondrial ribosome (mitoribosome), a dedicated translation machinery responsible for the synthesis of mitochondrial genome-encoded proteins, including at least some of the essential transmembrane subunits of the mitochondrial respiratory chain. The mitoribosomes are attached to the mitochondrial inner membrane and translation products are cotranslationally integrated into the membrane. This Candida albicans (strain SC5314 / ATCC MYA-2876) (Yeast) protein is Small ribosomal subunit protein uS9m (MRPS9).